The sequence spans 307 residues: Sex-lethal homolog (307 aa).

RRM domains are found at residues 85-163 (TNLI…YARP) and 171-251 (TNLY…LAEE). Over residues 285-299 (HRGRHNKNRNQKPHP) the composition is skewed to basic residues. The segment at 285 to 307 (HRGRHNKNRNQKPHPYHNPQKFI) is disordered.

The protein localises to the nucleus. Functionally, unknown; apparently not involved in somatic sex determination. The sequence is that of Sex-lethal homolog (SXL) from Chrysomya rufifacies (Hairy maggot blowfly).